We begin with the raw amino-acid sequence, 365 residues long: Chorismate synthase (365 aa).

Arg48 and Arg54 together coordinate NADP(+). FMN-binding positions include 129–131 (RSS), 241–242 (NA), Gly285, 300–304 (KPTSS), and Arg326.

Belongs to the chorismate synthase family. In terms of assembly, homotetramer. The cofactor is FMNH2.

It catalyses the reaction 5-O-(1-carboxyvinyl)-3-phosphoshikimate = chorismate + phosphate. It functions in the pathway metabolic intermediate biosynthesis; chorismate biosynthesis; chorismate from D-erythrose 4-phosphate and phosphoenolpyruvate: step 7/7. In terms of biological role, catalyzes the anti-1,4-elimination of the C-3 phosphate and the C-6 proR hydrogen from 5-enolpyruvylshikimate-3-phosphate (EPSP) to yield chorismate, which is the branch point compound that serves as the starting substrate for the three terminal pathways of aromatic amino acid biosynthesis. This reaction introduces a second double bond into the aromatic ring system. This chain is Chorismate synthase, found in Parvibaculum lavamentivorans (strain DS-1 / DSM 13023 / NCIMB 13966).